The sequence spans 269 residues: Hydroxyethylthiazole kinase (269 aa).

Substrate is bound at residue Met-46. ATP is bound by residues Arg-122 and Thr-168. A substrate-binding site is contributed by Gly-195.

This sequence belongs to the Thz kinase family. It depends on Mg(2+) as a cofactor.

The enzyme catalyses 5-(2-hydroxyethyl)-4-methylthiazole + ATP = 4-methyl-5-(2-phosphooxyethyl)-thiazole + ADP + H(+). It participates in cofactor biosynthesis; thiamine diphosphate biosynthesis; 4-methyl-5-(2-phosphoethyl)-thiazole from 5-(2-hydroxyethyl)-4-methylthiazole: step 1/1. In terms of biological role, catalyzes the phosphorylation of the hydroxyl group of 4-methyl-5-beta-hydroxyethylthiazole (THZ). The chain is Hydroxyethylthiazole kinase from Geobacillus thermodenitrificans (strain NG80-2).